The primary structure comprises 336 residues: UDP-N-acetylenolpyruvoylglucosamine reductase (336 aa).

An FAD-binding PCMH-type domain is found at 17–188 (GFDVRARYAS…TAVTLRLSRD (172 aa)). The active site involves Arg164. Ser236 serves as the catalytic Proton donor. Glu332 is an active-site residue.

It belongs to the MurB family. Requires FAD as cofactor.

Its subcellular location is the cytoplasm. It catalyses the reaction UDP-N-acetyl-alpha-D-muramate + NADP(+) = UDP-N-acetyl-3-O-(1-carboxyvinyl)-alpha-D-glucosamine + NADPH + H(+). It participates in cell wall biogenesis; peptidoglycan biosynthesis. Functionally, cell wall formation. The sequence is that of UDP-N-acetylenolpyruvoylglucosamine reductase from Cupriavidus pinatubonensis (strain JMP 134 / LMG 1197) (Cupriavidus necator (strain JMP 134)).